Here is a 498-residue protein sequence, read N- to C-terminus: Glycerol kinase (498 aa).

Residue threonine 11 coordinates ADP. ATP contacts are provided by threonine 11, threonine 12, and serine 13. Threonine 11 is a binding site for sn-glycerol 3-phosphate. Arginine 15 contacts ADP. Positions 81, 82, 133, and 242 each coordinate sn-glycerol 3-phosphate. Positions 81, 82, 133, 242, and 243 each coordinate glycerol. 2 residues coordinate ADP: threonine 264 and glycine 307. Residues threonine 264, glycine 307, glutamine 311, and glycine 411 each contribute to the ATP site. Glycine 411 lines the ADP pocket.

The protein belongs to the FGGY kinase family.

It catalyses the reaction glycerol + ATP = sn-glycerol 3-phosphate + ADP + H(+). Its pathway is polyol metabolism; glycerol degradation via glycerol kinase pathway; sn-glycerol 3-phosphate from glycerol: step 1/1. Inhibited by fructose 1,6-bisphosphate (FBP). In terms of biological role, key enzyme in the regulation of glycerol uptake and metabolism. Catalyzes the phosphorylation of glycerol to yield sn-glycerol 3-phosphate. In Afipia carboxidovorans (strain ATCC 49405 / DSM 1227 / KCTC 32145 / OM5) (Oligotropha carboxidovorans), this protein is Glycerol kinase.